Consider the following 1088-residue polypeptide: RNA-directed RNA polymerase (1088 aa).

Positions 501 to 687 (LSYGDVTRFL…AKRYIAGGKI (187 aa)) constitute a RdRp catalytic domain.

Belongs to the reoviridae RNA-directed RNA polymerase family. In terms of assembly, interacts with VP3 (Potential). Interacts with VP2; this interaction activates VP1. Interacts with NSP5; this interaction is probably necessary for the formation of functional virus factories. Interacts with NSP2; this interaction is weak. Mg(2+) is required as a cofactor.

It localises to the virion. It catalyses the reaction RNA(n) + a ribonucleoside 5'-triphosphate = RNA(n+1) + diphosphate. Its function is as follows. RNA-directed RNA polymerase that is involved in both transcription and genome replication. Together with VP3 capping enzyme, forms an enzyme complex positioned near the channels situated at each of the five-fold vertices of the core. Following infection, the outermost layer of the virus is lost, leaving a double-layered particle (DLP) made up of the core and VP6 shell. VP1 then catalyzes the transcription of fully conservative plus-strand genomic RNAs that are extruded through the DLP's channels into the cytoplasm where they function as mRNAs for translation of viral proteins. One copy of each of the viral (+)RNAs is also recruited during core assembly, together with newly synthesized polymerase complexes and VP2. The polymerase of these novo-formed particles catalyzes the synthesis of complementary minus-strands leading to dsRNA formation. To do so, the polymerase specifically recognizes and binds 4 bases 5'-UGUG-3' in the conserved 3'-sequence of plus-strand RNA templates. VP2 presumably activates the autoinhibited VP1-RNA complex to coordinate packaging and genome replication. Once dsRNA synthesis is complete, the polymerase switches to the transcriptional mode, thus providing secondary transcription. The protein is RNA-directed RNA polymerase of Homo sapiens (Human).